A 364-amino-acid polypeptide reads, in one-letter code: RNA polymerase II holoenzyme cyclin-like subunit (364 aa).

The Cyclin N-terminal domain occupies 53 to 143 (QQINRLSKRI…VGECEFSLIS (91 aa)). The interval 268-303 (PGFGSQGSQQQAGFSQGNSQGSLQGDSAAAEPKKVT) is disordered. The segment covering 273-289 (QGSQQQAGFSQGNSQGS) has biased composition (low complexity).

The protein belongs to the cyclin family. Cyclin C subfamily. In terms of assembly, component of the SRB8-11 complex, a regulatory module of the Mediator complex.

It localises to the nucleus. Component of the SRB8-11 complex. The SRB8-11 complex is a regulatory module of the Mediator complex which is itself involved in regulation of basal and activated RNA polymerase II-dependent transcription. The SRB8-11 complex may be involved in the transcriptional repression of a subset of genes regulated by Mediator. It may inhibit the association of the Mediator complex with RNA polymerase II to form the holoenzyme complex. The SRB8-11 complex phosphorylates the C-terminal domain (CTD) of the largest subunit of RNA polymerase II. This Chaetomium globosum (strain ATCC 6205 / CBS 148.51 / DSM 1962 / NBRC 6347 / NRRL 1970) (Soil fungus) protein is RNA polymerase II holoenzyme cyclin-like subunit (SSN8).